Reading from the N-terminus, the 528-residue chain is UDP-glucuronosyltransferase 1A9 (528 aa).

The first 23 residues, 1-23 (MAPVAFPTSFFLCLLLASGLAQA), serve as a signal peptide directing secretion. Asn-69 is a glycosylation site (N-linked (GlcNAc...) asparagine). N6-succinyllysine is present on Lys-97. N-linked (GlcNAc...) asparagine glycosylation is found at Asn-290 and Asn-428. The chain crosses the membrane as a helical span at residues 486–506 (VIGFLLAIVLTVVFIVFKCCA).

This sequence belongs to the UDP-glycosyltransferase family. Homodimer. Homooligomer. Interacts with UGT1A1, UGT1A3, UGT1A4, UGT1A6, UGT1A7, UGT1A8 and UGT1A10 to form heterodimers. In terms of tissue distribution, highly expressed in liver and at lower levels in stomach and kidney.

It localises to the endoplasmic reticulum membrane. It catalyses the reaction glucuronate acceptor + UDP-alpha-D-glucuronate = acceptor beta-D-glucuronoside + UDP + H(+). It carries out the reaction 2-hydroxy-17beta-estradiol + UDP-alpha-D-glucuronate = 2-hydroxy-17beta-estradiol 3-O-(beta-D-glucuronate) + UDP + H(+). The catalysed reaction is 4-hydroxy-17beta-estradiol + UDP-alpha-D-glucuronate = 17beta-estradiol 4-O-(beta-D-glucuronate) + UDP + H(+). The enzyme catalyses 2-hydroxyestrone + UDP-alpha-D-glucuronate = 2-hydroxyestrone 3-O-(beta-D-glucuronate) + UDP + H(+). It catalyses the reaction 4-hydroxyestrone + UDP-alpha-D-glucuronate = estrone 4-O-(beta-D-glucuronate) + UDP + H(+). It carries out the reaction prunetin + UDP-alpha-D-glucuronate = prunetin-5-O-beta-D-glucuronide + UDP. The catalysed reaction is 8-iso-prostaglandin F2alpha + UDP-alpha-D-glucuronate = 8-iso-prostaglandin F2alpha-glucuronide + UDP + H(+). The enzyme catalyses 5-epi-5-F2t-IsoP + UDP-alpha-D-glucuronate = 5-epi-5-F2t-IsoP-glucuronide + UDP + H(+). It catalyses the reaction (5Z,8Z,11Z,14Z)-eicosatetraenoate + UDP-alpha-D-glucuronate = O-[(5Z),(8Z),(11Z),(14Z)-eicosatetraenoyl]-beta-D-glucuronate + UDP. It carries out the reaction 15-hydroxy-(5Z,8Z,11Z,13E)-eicosatetraenoate + UDP-alpha-D-glucuronate = 15-O-(beta-D-glucuronosyl)-(5Z,8Z,11Z,14Z)-eicosatetraenoate + UDP + H(+). The catalysed reaction is prostaglandin B1 + UDP-alpha-D-glucuronate = 15-O-(beta-D-glucuronosyl)-prostaglandin B1 + UDP + H(+). The enzyme catalyses (E)-ferulate + UDP-alpha-D-glucuronate = (E)-4-O-(beta-D-glucuronosyl)-ferulate + UDP + H(+). It catalyses the reaction (E)-ferulate + UDP-alpha-D-glucuronate = (E)-ferulic acid beta-D-glucuronate ester + UDP. It carries out the reaction candesartan + UDP-alpha-D-glucuronate = candesartan O-beta-D-glucuronoside + UDP. The catalysed reaction is SN-38 + UDP-alpha-D-glucuronate = SN-38 O-beta-D-glucuronide + UDP + H(+). The enzyme catalyses mycophenolate + UDP-alpha-D-glucuronate = mycophenolate 7-O-beta-D-glucuronide + UDP + H(+). Its function is as follows. UDP-glucuronosyltransferase (UGT) that catalyzes phase II biotransformation reactions in which lipophilic substrates are conjugated with glucuronic acid to increase the metabolite's water solubility, thereby facilitating excretion into either the urine or bile. Essential for the elimination and detoxification of drugs, xenobiotics and endogenous compounds. Catalyzes the glucuronidation of endogenous estrogen hormones such as estradiol and estrone. Involved in the glucuronidation of arachidonic acid (AA) and AA-derived eicosanoids including 15-HETE, PGB1 and F2-isoprostanes (8-iso-PGF2alpha and 5-epi-5-F2t-IsoP). Glucuronates the phytochemical ferulic acid efficently at both the phenolic or the carboxylic acid group. Also catalyzes the glucuronidation of the isoflavones genistein, daidzein, glycitein, formononetin, biochanin A and prunetin, which are phytoestrogens with anticancer and cardiovascular properties. Involved in the glucuronidation of the AGTR1 angiotensin receptor antagonist caderastan, a drug which can inhibit the effect of angiotensin II. Involved in the biotransformation of 7-ethyl-10-hydroxycamptothecin (SN-38), the pharmacologically active metabolite of the anticancer drug irinotecan. Also metabolizes mycophenolate, an immunosuppressive agent. This chain is UDP-glucuronosyltransferase 1A9, found in Mus musculus (Mouse).